A 292-amino-acid polypeptide reads, in one-letter code: 4-hydroxy-tetrahydrodipicolinate synthase (292 aa).

Thr-45 lines the pyruvate pocket. Tyr-133 functions as the Proton donor/acceptor in the catalytic mechanism. Lys-161 functions as the Schiff-base intermediate with substrate in the catalytic mechanism. Pyruvate is bound at residue Ile-203.

It belongs to the DapA family. In terms of assembly, homotetramer; dimer of dimers.

The protein localises to the cytoplasm. It catalyses the reaction L-aspartate 4-semialdehyde + pyruvate = (2S,4S)-4-hydroxy-2,3,4,5-tetrahydrodipicolinate + H2O + H(+). It participates in amino-acid biosynthesis; L-lysine biosynthesis via DAP pathway; (S)-tetrahydrodipicolinate from L-aspartate: step 3/4. In terms of biological role, catalyzes the condensation of (S)-aspartate-beta-semialdehyde [(S)-ASA] and pyruvate to 4-hydroxy-tetrahydrodipicolinate (HTPA). This chain is 4-hydroxy-tetrahydrodipicolinate synthase, found in Vibrio vulnificus (strain CMCP6).